A 101-amino-acid chain; its full sequence is Chaperone modulatory protein CbpM (101 aa).

This sequence belongs to the CbpM family.

Interacts with CbpA and inhibits both the DnaJ-like co-chaperone activity and the DNA binding activity of CbpA. Together with CbpA, modulates the activity of the DnaK chaperone system. Does not inhibit the co-chaperone activity of DnaJ. The protein is Chaperone modulatory protein CbpM of Escherichia coli O1:K1 / APEC.